The sequence spans 310 residues: Ninja-family protein 3 (310 aa).

Disordered stretches follow at residues 1 to 29 (MASR…GEPD), 68 to 140 (SLPG…DDAQ), and 156 to 215 (DQGN…EQPP). Positions 99–108 (ERWRRREMQS) are enriched in basic and acidic residues. Polar residues-rich tracts occupy residues 156–166 (DQGNASSSMPE) and 176–193 (KSTS…QNKS).

It belongs to the Ninja family.

Its subcellular location is the nucleus. This chain is Ninja-family protein 3 (AFP-D1), found in Triticum aestivum (Wheat).